The chain runs to 945 residues: Isoleucine--tRNA ligase (945 aa).

The short motif at 66–76 is the 'HIGH' region element; that stretch reads PYANGDIHLGH. L-isoleucyl-5'-AMP is bound at residue Glu-581. The 'KMSKS' region signature appears at 622 to 626; sequence KMSKS. Lys-625 lines the ATP pocket. Positions 908, 911, 928, and 931 each coordinate Zn(2+).

Belongs to the class-I aminoacyl-tRNA synthetase family. IleS type 1 subfamily. As to quaternary structure, monomer. Zn(2+) serves as cofactor.

Its subcellular location is the cytoplasm. It carries out the reaction tRNA(Ile) + L-isoleucine + ATP = L-isoleucyl-tRNA(Ile) + AMP + diphosphate. Its function is as follows. Catalyzes the attachment of isoleucine to tRNA(Ile). As IleRS can inadvertently accommodate and process structurally similar amino acids such as valine, to avoid such errors it has two additional distinct tRNA(Ile)-dependent editing activities. One activity is designated as 'pretransfer' editing and involves the hydrolysis of activated Val-AMP. The other activity is designated 'posttransfer' editing and involves deacylation of mischarged Val-tRNA(Ile). The chain is Isoleucine--tRNA ligase from Burkholderia cenocepacia (strain HI2424).